The chain runs to 367 residues: Phosphoribosylaminoimidazole-succinocarboxamide synthase (367 aa).

The protein belongs to the SAICAR synthetase family.

It carries out the reaction 5-amino-1-(5-phospho-D-ribosyl)imidazole-4-carboxylate + L-aspartate + ATP = (2S)-2-[5-amino-1-(5-phospho-beta-D-ribosyl)imidazole-4-carboxamido]succinate + ADP + phosphate + 2 H(+). Its pathway is purine metabolism; IMP biosynthesis via de novo pathway; 5-amino-1-(5-phospho-D-ribosyl)imidazole-4-carboxamide from 5-amino-1-(5-phospho-D-ribosyl)imidazole-4-carboxylate: step 1/2. This Psychromonas ingrahamii (strain DSM 17664 / CCUG 51855 / 37) protein is Phosphoribosylaminoimidazole-succinocarboxamide synthase.